The sequence spans 940 residues: Gamma-aminobutyric acid type B receptor subunit 2 (940 aa).

The first 40 residues, 1–40 (MASPPSSGQPRPPPPPPPPARLLLPLLLSLLLSLAPGAWG), serve as a signal peptide directing secretion. Residues 41–482 (WARGAPRPPP…LRKISLPLYS (442 aa)) lie on the Extracellular side of the membrane. N89 is a glycosylation site (N-linked (GlcNAc...) asparagine). 3 disulfides stabilise this stretch: C107–C134, C236–C265, and C264–C301. N-linked (GlcNAc...) asparagine glycans are attached at residues N297, N388, N403, and N452. The chain crosses the membrane as a helical span at residues 483–503 (ILSALTILGMIMASAFLFFNI). The Cytoplasmic segment spans residues 504 to 521 (KNRNQKLIKMSSPYMNNL). A helical transmembrane segment spans residues 522 to 542 (IILGGMLSYASIFLFGLDGSF). Topologically, residues 543–550 (VSEKTFET) are extracellular. The helical transmembrane segment at 551 to 571 (LCTVRTWILTVGYTTAFGAMF) threads the bilayer. Residues 572 to 596 (AKTWRVHAIFKNVKMKKKIIKDQKL) lie on the Cytoplasmic side of the membrane. Residues 597-617 (LVIVGGMLLIDLCILICWQAV) traverse the membrane as a helical segment. Topologically, residues 618-653 (DPLRRTVERYSMEPDPAGRDISIRPLLEHCENTHMT) are extracellular. The helical transmembrane segment at 654–674 (IWLGIVYAYKGLLMLFGCFLA) threads the bilayer. Residues 675 to 690 (WETRNVSIPALNDSKY) are Cytoplasmic-facing. A helical membrane pass occupies residues 691-711 (IGMSVYNVGIMCIIGAAVSFL). Residues 712 to 719 (TRDQPNVQ) are Extracellular-facing. Residues 720–740 (FCIVALVIIFCSTITLCLVFV) traverse the membrane as a helical segment. The Cytoplasmic segment spans residues 741-940 (PKLITLRTNP…PSFRVMVSGL (200 aa)). A disordered region spans residues 762–789 (TQNQKKEDSKTSTSVTSVNQASTSRLEG). Over residues 772–786 (TSTSVTSVNQASTSR) the composition is skewed to polar residues. 2 positions are modified to phosphoserine: S775 and S778. Residues 781–818 (QASTSRLEGLQSENHRLRMKITELDKDLEEVTMQLQDT) adopt a coiled-coil conformation. Residue T818 is modified to Phosphothreonine. Phosphoserine occurs at positions 883, 892, 912, 915, 919, and 923.

The protein belongs to the G-protein coupled receptor 3 family. GABA-B receptor subfamily. As to quaternary structure, heterodimer of GABBR1 and GABBR2. Homodimers may form, but are inactive. Interacts (via C-terminus) with ATF4 (via leucine zipper domain).

It is found in the cell membrane. The protein localises to the postsynaptic cell membrane. In terms of biological role, component of a heterodimeric G-protein coupled receptor for GABA, formed by GABBR1 and GABBR2. Within the heterodimeric GABA receptor, only GABBR1 seems to bind agonists, while GABBR2 mediates coupling to G proteins. Ligand binding causes a conformation change that triggers signaling via guanine nucleotide-binding proteins (G proteins) and modulates the activity of down-stream effectors, such as adenylate cyclase. Signaling inhibits adenylate cyclase, stimulates phospholipase A2, activates potassium channels, inactivates voltage-dependent calcium-channels and modulates inositol phospholipid hydrolysis. Plays a critical role in the fine-tuning of inhibitory synaptic transmission. Pre-synaptic GABA receptor inhibits neurotransmitter release by down-regulating high-voltage activated calcium channels, whereas postsynaptic GABA receptor decreases neuronal excitability by activating a prominent inwardly rectifying potassium (Kir) conductance that underlies the late inhibitory postsynaptic potentials. Not only implicated in synaptic inhibition but also in hippocampal long-term potentiation, slow wave sleep, muscle relaxation and antinociception. Interacts with KCTD8, KCTD12 and KCTD16; this interaction determines the pharmacology and kinetics of the receptor response, the KCTD proteins markedly accelerating the GABA-B response, although to different extents. In Mus musculus (Mouse), this protein is Gamma-aminobutyric acid type B receptor subunit 2 (Gabbr2).